We begin with the raw amino-acid sequence, 228 residues long: LexA repressor (228 aa).

A DNA-binding region (H-T-H motif) is located at residues 26–46; it reads FDEMKDALDLRSKSGIHRLIT. Residues Ser-149 and Lys-187 each act as for autocatalytic cleavage activity in the active site.

This sequence belongs to the peptidase S24 family. Homodimer.

The enzyme catalyses Hydrolysis of Ala-|-Gly bond in repressor LexA.. Its function is as follows. Represses a number of genes involved in the response to DNA damage (SOS response), including recA and lexA. In the presence of single-stranded DNA, RecA interacts with LexA causing an autocatalytic cleavage which disrupts the DNA-binding part of LexA, leading to derepression of the SOS regulon and eventually DNA repair. The sequence is that of LexA repressor from Cereibacter sphaeroides (strain ATCC 17025 / ATH 2.4.3) (Rhodobacter sphaeroides).